A 590-amino-acid chain; its full sequence is MNGDEVRARASELPAEPGVYQFVARDPDGTADGERVLYVGKAVDIRDRVRSYGDPRSERIAGMVARADDVTVAVTDTETQALLLEANLVKRHQPRYNVRLKDDKSYPLVQVTSHREAPRIEVTRDPDPGAAAFGPYTDKGDVETVVKAVRSVYGLRGCSEHKYRDRERPCLDYEMGLCAAPCTGAISEREYREAVESATRFFEGETGALADPLRREMAAAAQAEAFERAANLRDRLAVVEGFHEGGGAAVAAGDADAGASTDVLGVAVEGDAATVARLHAEGGQLVERDQHRLEAPQGEDRVAAVLAAFLVQYYAERDLPERILLPEPHGDDEVAAWLDAADVAVGVPGAGREARLVELALKNAHRRAGGGDELGALADALGVRRPERIEGVDVSHAQGREVVGSNVCFVDGSAETADYRRKKLDEENDDYANMRRLVGWRAERAVDGRDDRPDPDVLLVDGGRGQLDAALDAVEAAGWDGPDAVIALAKDEEVVVTPDRTYDWGSDAPQLHVLQRVRDEAHRFAVAYHRTLRDDVTTALDGITGVGPELRARLLGRFGSVAGVRQASVKDLRDVAGVGEATAETIAKRL.

Positions 15-98 (AEPGVYQFVA…VKRHQPRYNV (84 aa)) constitute a GIY-YIG domain. A UVR domain is found at 207–242 (GALADPLRREMAAAAQAEAFERAANLRDRLAVVEGF).

The protein belongs to the UvrC family. Interacts with UvrB in an incision complex.

It is found in the cytoplasm. The UvrABC repair system catalyzes the recognition and processing of DNA lesions. UvrC both incises the 5' and 3' sides of the lesion. The N-terminal half is responsible for the 3' incision and the C-terminal half is responsible for the 5' incision. This chain is UvrABC system protein C, found in Halobacterium salinarum (strain ATCC 29341 / DSM 671 / R1).